Here is a 412-residue protein sequence, read N- to C-terminus: Argininosuccinate synthase (412 aa).

Residues 10-18 (AYSGGLDTS) and Ala-36 contribute to the ATP site. L-citrulline is bound by residues Tyr-87 and Ser-92. Tyr-87 is modified (phosphotyrosine). Residue Lys-112 is modified to N6-acetyllysine. At Tyr-113 the chain carries Phosphotyrosine. 115-123 (SHGATGKGN) is an ATP binding site. L-aspartate is bound by residues Thr-119, Asn-123, and Asp-124. An L-citrulline-binding site is contributed by Asn-123. Position 127 (Arg-127) interacts with L-citrulline. Residues Lys-165 and Lys-176 each carry the N6-acetyllysine; by CLOCK modification. Ser-177 and Ser-180 each carry phosphoserine. Positions 180 and 189 each coordinate L-citrulline. Phosphoserine is present on Ser-219. Glu-270 and Tyr-282 together coordinate L-citrulline.

The protein belongs to the argininosuccinate synthase family. Type 1 subfamily. As to quaternary structure, homotetramer. Interacts with NMRAL1. Interacts with CLOCK; in a circadian manner. Forms tissue-specific complexes with ASL, SLC7A1, HSP90AA1 and nitric oxide synthase NOS1, NOS2 or NOS3; the complex regulates cell-autonomous L-arginine synthesis and citrulline recycling while channeling extracellular L-arginine to nitric oxide synthesis pathway. Acetylated by CLOCK in a circadian manner which negatively regulates its enzyme activity. Deacetylated by histone deacetylases. In terms of tissue distribution, widely expressed.

The protein localises to the cytoplasm. The protein resides in the cytosol. The enzyme catalyses L-citrulline + L-aspartate + ATP = 2-(N(omega)-L-arginino)succinate + AMP + diphosphate + H(+). The protein operates within amino-acid biosynthesis; L-arginine biosynthesis; L-arginine from L-ornithine and carbamoyl phosphate: step 2/3. It participates in nitrogen metabolism; urea cycle; (N(omega)-L-arginino)succinate from L-aspartate and L-citrulline: step 1/1. One of the enzymes of the urea cycle, the metabolic pathway transforming neurotoxic amonia produced by protein catabolism into inocuous urea in the liver of ureotelic animals. Catalyzes the formation of arginosuccinate from aspartate, citrulline and ATP and together with ASL it is responsible for the biosynthesis of arginine in most body tissues. The chain is Argininosuccinate synthase from Mus musculus (Mouse).